Reading from the N-terminus, the 260-residue chain is Acetylglutamate kinase (260 aa).

Residues 41–42 (GG), Arg63, and Asn157 each bind substrate.

It belongs to the acetylglutamate kinase family. ArgB subfamily.

The protein resides in the cytoplasm. It carries out the reaction N-acetyl-L-glutamate + ATP = N-acetyl-L-glutamyl 5-phosphate + ADP. It functions in the pathway amino-acid biosynthesis; L-arginine biosynthesis; N(2)-acetyl-L-ornithine from L-glutamate: step 2/4. In terms of biological role, catalyzes the ATP-dependent phosphorylation of N-acetyl-L-glutamate. This Acidobacterium capsulatum (strain ATCC 51196 / DSM 11244 / BCRC 80197 / JCM 7670 / NBRC 15755 / NCIMB 13165 / 161) protein is Acetylglutamate kinase.